A 420-amino-acid polypeptide reads, in one-letter code: Glucose-1-phosphate adenylyltransferase (420 aa).

Alpha-D-glucose 1-phosphate contacts are provided by residues Y107, G172, 187–188, and S205; that span reads EK.

This sequence belongs to the bacterial/plant glucose-1-phosphate adenylyltransferase family. Homotetramer.

The enzyme catalyses alpha-D-glucose 1-phosphate + ATP + H(+) = ADP-alpha-D-glucose + diphosphate. It functions in the pathway glycan biosynthesis; glycogen biosynthesis. Its function is as follows. Involved in the biosynthesis of ADP-glucose, a building block required for the elongation reactions to produce glycogen. Catalyzes the reaction between ATP and alpha-D-glucose 1-phosphate (G1P) to produce pyrophosphate and ADP-Glc. The chain is Glucose-1-phosphate adenylyltransferase from Rhizobium rhizogenes (strain K84 / ATCC BAA-868) (Agrobacterium radiobacter).